Here is a 109-residue protein sequence, read N- to C-terminus: Mitochondrial import inner membrane translocase subunit TIM12 (109 aa).

N-acetylserine is present on serine 2. The Twin CX3C motif signature appears at 40-66 (CLEKCIPHEGFGEPDLTKGEQCCIDRC). 2 cysteine pairs are disulfide-bonded: cysteine 40–cysteine 66 and cysteine 44–cysteine 62.

This sequence belongs to the small Tim family. Component of the TIM22 complex, whose core is composed of TIM18, TIM22 and TIM54, associated with the peripheral proteins MRS5/TIM12 and the 70 kDa heterohexamer composed of TIM9 and TIM10 (or TIM8 and TIM13). Interacts directly with both the TIM22 protein and the TIM9-TIM10 heterohexamer. Interacts with multi-pass transmembrane proteins in transit.

It localises to the mitochondrion inner membrane. The protein resides in the mitochondrion intermembrane space. Essential component of the TIM22 complex, a complex that mediates the import and insertion of multi-pass transmembrane proteins into the mitochondrial inner membrane. The TIM22 complex forms a twin-pore translocase that uses the membrane potential as external driving force. In the TIM22 complex, it acts as a docking point for the soluble TIM9-TIM10 heterohexamer that guides the target proteins in transit through the aqueous mitochondrial intermembrane space. The chain is Mitochondrial import inner membrane translocase subunit TIM12 (TIM12) from Saccharomyces cerevisiae (strain ATCC 204508 / S288c) (Baker's yeast).